Consider the following 510-residue polypeptide: MANIDIAGIMKDLPNDGRIPKTKIVCTLGPSSRTVPMLEKLLRAGMNVARFNFSHGTHEYHQETLDNLKIAMQNTQILCAVMLDTKGPEIRTGFLTDGKPIQLKEGQEITVSTDYTIKGNEEMISMSYKKLVMDLKPGNTILCADGTITLTVLSCDPPSGTVRCRCENTATLGERKNVNLPGVVVDLPTLTEKDKEDILEWGVPNNIDMIALSFVRKGSDLVNVRKVLGPHAKRIQLMSKVENQEGVINFDEILRETDSFMVARGDLGMEIPVEKIFLAQKMMIYKCNLAGKAVVTATQMLESMIKSPAPTRAEATDVANAVLDGTDCVMLSGESAAGAYPELAVKIMSRICIEAESSLDNEAIFKEMIRCTPLPMSPLESLASSAVRTANKARAKLIVVLTRGGSTAKLVAKYRPAVPILSVVVPVLTTDSFDWSISDETPARHSLVYRGLIPLLGEGSAKATDSESTEVILEAALKSAVTRGLCKPGDAVVALHRIGSASVIKICVVK.

R50 provides a ligand contact to substrate. Residues N52, S54, D84, and T85 each coordinate K(+). 52–55 (NFSH) contacts ATP. 2 residues coordinate ATP: R91 and K176. Residue E242 participates in Mg(2+) binding. 3 residues coordinate substrate: G265, D266, and T298. D266 serves as a coordination point for Mg(2+).

Belongs to the pyruvate kinase family. In terms of assembly, homotetramer. It depends on Mg(2+) as a cofactor. The cofactor is K(+).

The protein localises to the cytoplasm. The catalysed reaction is pyruvate + ATP = phosphoenolpyruvate + ADP + H(+). It participates in carbohydrate degradation; glycolysis; pyruvate from D-glyceraldehyde 3-phosphate: step 5/5. This Solanum tuberosum (Potato) protein is Pyruvate kinase, cytosolic isozyme.